Reading from the N-terminus, the 1764-residue chain is Cilia- and flagella-associated protein 44 (1764 aa).

WD repeat units follow at residues 115–157, 160–199, 208–248, 255–294, 361–400, 454–493, and 495–534; these read GTER…IVLR, AFSQ…TGLK, GNVE…VVLT, CHDG…DAEP, HPAG…VLAE, AHKG…QPGT, and VPGM…GVLL. The tract at residues 570–654 is disordered; it reads QLVVPKPKRP…GGPSSTTGEL (85 aa). Over residues 575-584 the composition is skewed to basic residues; that stretch reads KPKRPKKKKG. Composition is skewed to basic and acidic residues over residues 585 to 596 and 604 to 628; these read KNDGEEGDKEGG and GEDK…GRAA. The segment covering 629 to 641 has biased composition (acidic residues); sequence EEEEEEEADDEAD. WD repeat units lie at residues 649 to 692, 707 to 752, and 753 to 791; these read STTG…PLAA, AHAG…LHDM, and QSGR…ELAP. Residues 821–850 are a coiled coil; sequence YTLEEEKQQAERDQQVREAEEKKLSVRQRL. Disordered regions lie at residues 972-1003 and 1426-1468; these read AAAG…GDAA and KKKA…CPPG. Over residues 1434–1462 the composition is skewed to acidic residues; that stretch reads GEDDYDSEEDEEDEDMGDDEVDDDDDGGE. 3 coiled-coil regions span residues 1479-1517, 1567-1674, and 1729-1758; these read DLRE…LVEQ, LVFS…DAKI, and EERD…LRRK.

The protein belongs to the CFAP44 family.

It is found in the cell projection. The protein localises to the cilium. The protein resides in the flagellum. It localises to the cytoplasm. Its subcellular location is the cytoskeleton. It is found in the flagellum axoneme. Flagellar protein involved in sperm flagellum axoneme organization and function. This Chlamydomonas reinhardtii (Chlamydomonas smithii) protein is Cilia- and flagella-associated protein 44.